The chain runs to 385 residues: Selenoprotein P (385 aa).

The first 19 residues, 1-19 (MWRSLGLALALCLLPYGGA), serve as a signal peptide directing secretion. Sec-59 is a non-standard amino acid (selenocysteine). Residues 59 to 62 (UYLC) constitute a cross-link (cysteinyl-selenocysteine (Sec-Cys); in isoform Se-P1). 3 N-linked (GlcNAc...) asparagine glycosylation sites follow: Asn-83, Asn-174, and Asn-188. Cystine bridges form between Cys-168-Cys-186 and Cys-172-Cys-175. The tract at residues 196-262 (KTTEPSEEHN…KGQHRQGHLE (67 aa)) is disordered. The span at 243 to 258 (LHHHHHHHKHKGQHRQ) shows a compositional bias: basic residues. A non-standard amino acid (selenocysteine) is located at residue Sec-264. Residue Ser-269 is modified to Phosphoserine. Residues Sec-282, Sec-323, Sec-335, and Sec-357 are each a non-standard amino acid (selenocysteine). The tract at residues 357–385 (UHSQHVSPTEASPNUSUNNKTKKUKUNLN) is disordered. The span at 360 to 369 (QHVSPTEASP) shows a compositional bias: polar residues. O-linked (Hex...) threonine; partial glycosylation occurs at Thr-365. Non-standard amino acids (selenocysteine) are located at Sec-371, Sec-373, Sec-380, and Sec-382. Over residues 376 to 385 (KTKKUKUNLN) the composition is skewed to basic residues.

It belongs to the selenoprotein P family. Isoform Se-P1 contains several disulfide bridges and a selenide-sulfide bond between Sec-59 and Cys-62. These bonds are speculated to serve as redox-active pairs. In terms of processing, phosphorylation sites are present in the extracellular medium. In terms of tissue distribution, widely expressed, mainly by the liver. Secreted in plasma.

The protein resides in the secreted. Might be responsible for some of the extracellular antioxidant defense properties of selenium or might be involved in the transport of selenium. May supply selenium to tissues such as brain and testis. This Rattus norvegicus (Rat) protein is Selenoprotein P.